The primary structure comprises 528 residues: Calcium-dependent protein kinase 13 (528 aa).

Glycine 2 carries N-myristoyl glycine lipidation. The segment covering 17-32 has biased composition (basic and acidic residues); it reads KSNYSGHDHARKDAAG. The tract at residues 17 to 37 is disordered; the sequence is KSNYSGHDHARKDAAGGKKSA. Serine 43 is modified (phosphoserine). Residues 54-312 form the Protein kinase domain; it reads YLLDRELGRG…AKQVLEHPWI (259 aa). ATP-binding positions include 60–68 and lysine 83; that span reads LGRGEFGVT. Aspartate 178 acts as the Proton acceptor in catalysis. Serine 218 bears the Phosphoserine mark. The tract at residues 318–348 is autoinhibitory domain; the sequence is APNVPLGDVVKSRLKQFSVMNRFKRKALRVI. 4 consecutive EF-hand domains span residues 355–390, 391–426, 427–462, and 463–498; these read EEVEDIKVMFNKMDTDNDGIVSIEELKAGLRDFSTQ, LAESEVQMLIEAVDTKGKGTLDYGEFVAVSLHLQKV, ANDEHLRKAFSYFDKDGNGYILPQELCDALKEDGGD, and DCVDVANDIFQEVDTDKDGRISYEEFAAMMKTGTDW. Residues aspartate 368, aspartate 370, aspartate 372, glutamate 379, aspartate 404, threonine 410, glutamate 415, aspartate 440, aspartate 442, asparagine 444, tyrosine 446, glutamate 451, aspartate 476, aspartate 478, aspartate 480, and arginine 482 each coordinate Ca(2+). Serine 484 is modified (phosphoserine). Residue glutamate 487 participates in Ca(2+) binding. Serine 522 carries the post-translational modification Phosphoserine.

This sequence belongs to the protein kinase superfamily. Ser/Thr protein kinase family. CDPK subfamily.

It localises to the cell membrane. The catalysed reaction is L-seryl-[protein] + ATP = O-phospho-L-seryl-[protein] + ADP + H(+). It catalyses the reaction L-threonyl-[protein] + ATP = O-phospho-L-threonyl-[protein] + ADP + H(+). Activated by calcium. Autophosphorylation may play an important role in the regulation of the kinase activity. Its function is as follows. May play a role in signal transduction pathways that involve calcium as a second messenger. The protein is Calcium-dependent protein kinase 13 (CPK13) of Arabidopsis thaliana (Mouse-ear cress).